The following is a 249-amino-acid chain: MAGHSKWANIKHRKARQDAVKGKVFTKIIREIVSAAKQGDPDPDKNPRLRAVIEKALSVNMTRDTINRAVARGTGGDDNDNMDEVSYEGYGIGGVAVLVETMTDNLNRTVSEVRHAFTKNEGNLGTTGSVAYLFNKRGEISFNDISLEDEVMLVALDAGALDIENDGKSLLVITEWENFGHVKDALNAAGLVSDNAEVTMSPSTSAEIDNVEDAEKVMKMIDMLEDIDDVQEVYSNVNFSDEVMAQLEQ.

This sequence belongs to the TACO1 family.

It localises to the cytoplasm. This Psychrobacter arcticus (strain DSM 17307 / VKM B-2377 / 273-4) protein is Probable transcriptional regulatory protein Psyc_0938.